The primary structure comprises 181 residues: Coatomer subunit zeta-3 (181 aa).

This sequence belongs to the adaptor complexes small subunit family. Oligomeric complex that consists of at least the alpha, beta, beta', gamma, delta, epsilon and zeta subunits.

Its subcellular location is the cytoplasm. It is found in the golgi apparatus membrane. It localises to the cytoplasmic vesicle. The protein localises to the COPI-coated vesicle membrane. The coatomer is a cytosolic protein complex that binds to dilysine motifs and reversibly associates with Golgi non-clathrin-coated vesicles, which further mediate biosynthetic protein transport from the ER, via the Golgi up to the trans Golgi network. Coatomer complex is required for budding from Golgi membranes, and is essential for the retrograde Golgi-to-ER transport of dilysine-tagged proteins. The zeta subunit may be involved in regulating the coat assembly and, hence, the rate of biosynthetic protein transport due to its association-dissociation properties with the coatomer complex. The chain is Coatomer subunit zeta-3 from Arabidopsis thaliana (Mouse-ear cress).